Consider the following 83-residue polypeptide: Delta-conotoxin-like Ac6.2 (83 aa).

Residues 1-22 (MKLTCVVIVAVLFLTAWTFVTA) form the signal peptide. Positions 23–51 (DDSRYGLKNLFPKARHEMKNPEASKLNKR) are excised as a propeptide. Intrachain disulfides connect Cys-54–Cys-69, Cys-61–Cys-73, and Cys-68–Cys-78. 4-hydroxyproline is present on residues Pro-57 and Pro-65.

Belongs to the conotoxin O1 superfamily. In terms of tissue distribution, expressed by the venom duct.

Its subcellular location is the secreted. Functionally, delta-conotoxins bind to site 6 of voltage-gated sodium channels (Nav) and inhibit the inactivation process. The sequence is that of Delta-conotoxin-like Ac6.2 from Conus achatinus (Little frog cone).